The following is a 520-amino-acid chain: 2-isopropylmalate synthase (520 aa).

Residues 12-274 (VVIFDTTLRD…DTGIDTTMLT (263 aa)) enclose the Pyruvate carboxyltransferase domain. Aspartate 21, histidine 209, histidine 211, and asparagine 245 together coordinate Mn(2+). Residues 398–520 (KLLSLSVIAG…RLHAQHAAVV (123 aa)) are regulatory domain.

Belongs to the alpha-IPM synthase/homocitrate synthase family. LeuA type 1 subfamily. In terms of assembly, homodimer. Requires Mn(2+) as cofactor.

The protein resides in the cytoplasm. The catalysed reaction is 3-methyl-2-oxobutanoate + acetyl-CoA + H2O = (2S)-2-isopropylmalate + CoA + H(+). The protein operates within amino-acid biosynthesis; L-leucine biosynthesis; L-leucine from 3-methyl-2-oxobutanoate: step 1/4. Catalyzes the condensation of the acetyl group of acetyl-CoA with 3-methyl-2-oxobutanoate (2-ketoisovalerate) to form 3-carboxy-3-hydroxy-4-methylpentanoate (2-isopropylmalate). This is 2-isopropylmalate synthase from Methylorubrum populi (strain ATCC BAA-705 / NCIMB 13946 / BJ001) (Methylobacterium populi).